The primary structure comprises 249 residues: MANDPTHQFLVQPIIPIEIGGVDFSFTNASLFMVATVAAASGFLYFATSNRGLIPTRMQSVAEMSYEFIASMLREGAGKKGMVFFPFVFSLFMFVLTANLLGMFPYFFTVTSQIIVTFALACLVIGTVIVYGFYKHGLHFFGIFAPSGVPKALLPLVASIEMISFLSRPISLSVRLFANMLAGHITLKVFAGFVASMGALGALGVGGAVLPLIMTVAMTALEFLVAFLQAYVFAVLTCMYLNDAVHGGH.

Helical transmembrane passes span 29–49, 84–104, 114–134, 140–160, 193–213, and 216–236; these read ASLF…FATS, FFPF…LGMF, IIVT…YGFY, FFGI…VASI, FVAS…LPLI, and VAMT…FAVL.

The protein belongs to the ATPase A chain family. As to quaternary structure, F-type ATPases have 2 components, CF(1) - the catalytic core - and CF(0) - the membrane proton channel. CF(1) has five subunits: alpha(3), beta(3), gamma(1), delta(1), epsilon(1). CF(0) has three main subunits: a(1), b(2) and c(9-12). The alpha and beta chains form an alternating ring which encloses part of the gamma chain. CF(1) is attached to CF(0) by a central stalk formed by the gamma and epsilon chains, while a peripheral stalk is formed by the delta and b chains.

Its subcellular location is the cell inner membrane. Functionally, key component of the proton channel; it plays a direct role in the translocation of protons across the membrane. The protein is ATP synthase subunit a of Agrobacterium fabrum (strain C58 / ATCC 33970) (Agrobacterium tumefaciens (strain C58)).